A 516-amino-acid chain; its full sequence is Immunoglobulin G-binding protein A (516 aa).

An N-terminal signal peptide occupies residues 1-36 (MKKKNIYSIRKLGVGIASVTLGTLLISGGVTPAANA). A YSIRK-G/S signaling motif motif is present at residues 7–18 (YSIRKLGVGIAS). One copy of the Immunoglobulin-binding region E repeat lies at 37-92 (AQHDEAQQNAFYQVLNMPNLNADQRNGFIQSLKDDPSQSANVLGEAQKLNDSQAPK). The Immunoglobulin-binding region D repeat unit spans residues 93-153 (ADAQQNNFNK…KKLNESQAPK (61 aa)). The Immunoglobulin-binding region A repeat unit spans residues 154–211 (ADNNFNKEQQNAFYEILNMPNLNEEQRNGFIQSLKDDPSQSANLLSEAKKLNESQAPK). An Immunoglobulin-binding region B repeat occupies 212–269 (ADNKFNKEQQNAFYEILHLPNLNEEQRNGFIQSLKDDPSQSANLLAEAKKLNDAQAPK). Residues 270–327 (ADNKFNKEQQNAFYEILHLPNLTEEQRNGFIQSLKDDPSVSKEILAEAKKLNDAQAPK) form an Immunoglobulin-binding region C repeat. Basic and acidic residues predominate over residues 318–420 (KKLNDAQAPK…GNKPGKEDGN (103 aa)). 2 disordered regions span residues 318 to 440 (KKLN…ANGT) and 467 to 487 (KKQP…ETGE). A run of 11 repeats spans residues 333 to 340 (KPGKEDNN), 341 to 348 (KPGKEDNN), 349 to 356 (KPGKEDNN), 357 to 364 (KPGKEDNN), 365 to 372 (KPGKEDGN), 373 to 380 (KPGKEDNK), 381 to 388 (KPGKEDGN), 389 to 396 (KPGKEDNK), 397 to 404 (KPGKEDGN), 405 to 412 (KPGKEDGN), and 413 to 420 (KPGKEDGN). The tract at residues 333–420 (KPGKEDNNKP…GNKPGKEDGN (88 aa)) is 11 X 8 AA approximate tandem repeats. In terms of domain architecture, LysM spans 421 to 465 (GVHVVKPGDTVNDIAKANGTTADKIAADNKLADKNMIKPGQELVV). The LPXTG sorting signal motif lies at 482–486 (LPETG). Pentaglycyl murein peptidoglycan amidated threonine is present on T485. The propeptide at 486 to 516 (GEENPFIGTTVFGGLSLALGAALLAGRRREL) is removed by sortase A.

This sequence belongs to the immunoglobulin-binding protein SpA family. As to quaternary structure, interacts with host TNFRSF1A; this interaction leads to the stimulation of both surface expression and shedding of TNFRSF1A.

Its subcellular location is the secreted. It localises to the cell wall. Plays a role in the inhibition of the host innate and adaptive immune responses. Possesses five immunoglobulin-binding domains that capture both the fragment crystallizable region (Fc region) and the Fab region (part of Ig that identifies antigen) of immunoglobulins. In turn, Staphylococcus aureus is protected from phagocytic killing via inhibition of Ig Fc region. In addition, the host elicited B-cell response is prevented due to a decrease of antibody-secreting cell proliferation that enter the bone marrow, thereby decreasing long-term antibody production. Inhibits osteogenesis by preventing osteoblast proliferation and expression of alkaline phosphatase, type I collagen, osteopontin and osteocalcin. Acts directly as a pro-inflammatory factor in the lung through its ability to bind and activate tumor necrosis factor alpha receptor 1/TNFRSF1A. The polypeptide is Immunoglobulin G-binding protein A (spa) (Staphylococcus aureus (strain NCTC 8325 / PS 47)).